Here is a 269-residue protein sequence, read N- to C-terminus: Formamidopyrimidine-DNA glycosylase (269 aa).

Pro-2 acts as the Schiff-base intermediate with DNA in catalysis. Glu-3 (proton donor) is an active-site residue. Lys-57 (proton donor; for beta-elimination activity) is an active-site residue. DNA is bound by residues His-90, Arg-109, and Lys-150. The FPG-type zinc finger occupies 235–269; the sequence is QVYGRKGEPCRVCGTPIVATKHAQRATFYCRHCQK. Catalysis depends on Arg-259, which acts as the Proton donor; for delta-elimination activity.

Belongs to the FPG family. In terms of assembly, monomer. Zn(2+) serves as cofactor.

The enzyme catalyses Hydrolysis of DNA containing ring-opened 7-methylguanine residues, releasing 2,6-diamino-4-hydroxy-5-(N-methyl)formamidopyrimidine.. The catalysed reaction is 2'-deoxyribonucleotide-(2'-deoxyribose 5'-phosphate)-2'-deoxyribonucleotide-DNA = a 3'-end 2'-deoxyribonucleotide-(2,3-dehydro-2,3-deoxyribose 5'-phosphate)-DNA + a 5'-end 5'-phospho-2'-deoxyribonucleoside-DNA + H(+). Its function is as follows. Involved in base excision repair of DNA damaged by oxidation or by mutagenic agents. Acts as a DNA glycosylase that recognizes and removes damaged bases. Has a preference for oxidized purines, such as 7,8-dihydro-8-oxoguanine (8-oxoG). Has AP (apurinic/apyrimidinic) lyase activity and introduces nicks in the DNA strand. Cleaves the DNA backbone by beta-delta elimination to generate a single-strand break at the site of the removed base with both 3'- and 5'-phosphates. The sequence is that of Formamidopyrimidine-DNA glycosylase from Salmonella enteritidis PT4 (strain P125109).